We begin with the raw amino-acid sequence, 90 residues long: Probable Fe(2+)-trafficking protein (90 aa).

It belongs to the Fe(2+)-trafficking protein family.

Could be a mediator in iron transactions between iron acquisition and iron-requiring processes, such as synthesis and/or repair of Fe-S clusters in biosynthetic enzymes. The polypeptide is Probable Fe(2+)-trafficking protein (Photobacterium profundum (strain SS9)).